A 481-amino-acid polypeptide reads, in one-letter code: Glycogen synthase (481 aa).

Lysine 15 provides a ligand contact to ADP-alpha-D-glucose.

It belongs to the glycosyltransferase 1 family. Bacterial/plant glycogen synthase subfamily.

The catalysed reaction is [(1-&gt;4)-alpha-D-glucosyl](n) + ADP-alpha-D-glucose = [(1-&gt;4)-alpha-D-glucosyl](n+1) + ADP + H(+). Its pathway is glycan biosynthesis; glycogen biosynthesis. Synthesizes alpha-1,4-glucan chains using ADP-glucose. This is Glycogen synthase from Thermosipho melanesiensis (strain DSM 12029 / CIP 104789 / BI429).